A 197-amino-acid polypeptide reads, in one-letter code: Recombination protein RecR (197 aa).

The segment at 55 to 70 (CVQCRDFTESEICTIC) adopts a C4-type zinc-finger fold. In terms of domain architecture, Toprim spans 78–173 (QQLCVVESPA…RPSRLAQGMP (96 aa)).

Belongs to the RecR family.

In terms of biological role, may play a role in DNA repair. It seems to be involved in an RecBC-independent recombinational process of DNA repair. It may act with RecF and RecO. The sequence is that of Recombination protein RecR from Xanthomonas euvesicatoria pv. vesicatoria (strain 85-10) (Xanthomonas campestris pv. vesicatoria).